The primary structure comprises 566 residues: Myo-inositol transporter 1A (566 aa).

Residues 1-64 are Cytoplasmic-facing; that stretch reads MSDEKNYGIS…ERTEKLTKFV (64 aa). Residues 65-85 traverse the membrane as a helical segment; the sequence is VGLALFASVSGFCFGFDTGVI. Residues 86–106 lie on the Extracellular side of the membrane; that stretch reads SAALVSIKDDFGHILDDTEKE. The helical transmembrane segment at 107–127 threads the bilayer; the sequence is WISAATSCGALVGALSSGALA. The Cytoplasmic segment spans residues 128-140; sequence DRVGRKWTLAVGD. Residues 141–161 traverse the membrane as a helical segment; it reads VWFTLGAIIICSSFSVVQMIV. Over 162–163 the chain is Extracellular; the sequence is GR. A helical transmembrane segment spans residues 164 to 184; the sequence is AVLGLGVGTAAAIAPLYIAEV. Topologically, residues 185-192 are cytoplasmic; that stretch reads APTRFRGA. The chain crosses the membrane as a helical span at residues 193–213; it reads LVTVQSIAITGGQFFSYCIGI. Topologically, residues 214–222 are extracellular; it reads PLTGHNGWR. Residues 223 to 243 form a helical membrane-spanning segment; sequence IQFAIGIVPAVVQAAVVHFLP. Topologically, residues 244–313 are cytoplasmic; that stretch reads ESPRYDLLRG…VLTEGKYRKP (70 aa). The helical transmembrane segment at 314-334 threads the bilayer; the sequence is AITALGIGIFQQLCGFNSLMY. The Extracellular segment spans residues 335 to 349; that stretch reads YAATIFSYAGFDNPT. A helical membrane pass occupies residues 350–370; it reads SVGLIVSGTNWFFTFVAMMIL. At 371–377 the chain is on the cytoplasmic side; the sequence is DRVGKRR. Residues 378–398 form a helical membrane-spanning segment; that stretch reads ILLSTYPGMIAGLALASVAFW. The Extracellular segment spans residues 399–421; it reads KMTGSTGHRLVEGTEYPQQWSNM. Residues 422–442 form a helical membrane-spanning segment; that stretch reads MLGMMVVFIAFYATGSGNITW. Residues 443 to 458 are Cytoplasmic-facing; sequence TVGEMFPLEMRGIGAS. The chain crosses the membrane as a helical span at residues 459-479; that stretch reads ILAGGVWAANIVISATFLTLM. Topologically, residues 480–485 are extracellular; that stretch reads NAIGPT. A helical transmembrane segment spans residues 486–506; the sequence is PTFALYAGICLAGLIFIYFCY. Residues 507–566 lie on the Cytoplasmic side of the membrane; it reads PEPSGLSLEEIQIIYNYGFGVQKSREIRAEHKLKAQEMRDRANSHIGGSATASDDQLNKV. Residues 546–566 are disordered; that stretch reads DRANSHIGGSATASDDQLNKV. Polar residues predominate over residues 556 to 566; it reads ATASDDQLNKV.

Belongs to the major facilitator superfamily. Sugar transporter (TC 2.A.1.1) family.

The protein localises to the cell membrane. It catalyses the reaction myo-inositol(out) + H(+)(out) = myo-inositol(in) + H(+)(in). Its function is as follows. Major transporter for myo-inositol. Plays a role in the traversal of the host blood-brain barrier. This Cryptococcus neoformans var. grubii serotype A (strain H99 / ATCC 208821 / CBS 10515 / FGSC 9487) (Filobasidiella neoformans var. grubii) protein is Myo-inositol transporter 1A.